An 843-amino-acid polypeptide reads, in one-letter code: Alpha-L-fucosidase 2 (843 aa).

Positions 1-27 (MAEKSSFFVHFSCLLLLLTIIITCGEG) are cleaved as a signal peptide. N-linked (GlcNAc...) asparagine glycans are attached at residues Asn-62, Asn-253, Asn-365, and Asn-605.

It belongs to the glycosyl hydrolase 95 family. As to expression, ubiquitous. Highest expression in vascular tissues, leaf trichomes, root elongation zone and emerging lateral roots.

Its subcellular location is the secreted. The protein resides in the extracellular space. It localises to the apoplast. The catalysed reaction is an alpha-L-fucoside + H2O = L-fucose + an alcohol. Its function is as follows. Hydrolyzes alpha-1,2-linked fucose. Also active on fucosylated xyloglucan oligosaccharides. No activity with 3-fucosyllactose, p-nitrophenyl-alpha-I-fucopyranoside, lacto-N-fucopentaose II, lacto-N-fucopentaose III or alpha 1,6-fucosylated chitopentaose. Involved in apoplastic xyloglucan metabolism. The protein is Alpha-L-fucosidase 2 (FUC95A) of Arabidopsis thaliana (Mouse-ear cress).